The primary structure comprises 5098 residues: Auxin transport protein BIG (5098 aa).

N-acetylalanine is present on Ala-2. 2 consecutive transmembrane segments (helical) span residues Ala-1150–Leu-1170 and Leu-1458–Leu-1478. Residues Ser-1539–Ser-1549 show a composition bias toward acidic residues. Residues Ser-1539–Glu-1562 form a disordered region. The UBR-type zinc finger occupies Lys-1573–Pro-1644. The ZZ-type zinc-finger motif lies at Ser-2613–Glu-2672. Residues Cys-2618, Cys-2621, Cys-2633, Cys-2636, Cys-2642, Cys-2645, His-2658, and His-2662 each coordinate Zn(2+). The chain crosses the membrane as a helical span at residues Ser-2813–Trp-2833. The interval Glu-3149 to His-3174 is disordered. A compositionally biased stretch (polar residues) spans Val-3151 to Val-3162. An MYND-type; degenerate zinc finger spans residues Cys-3464–Cys-3504. 2 coiled-coil regions span residues Lys-3537–Leu-3557 and Leu-4313–Glu-4333. The interval Pro-4569–Asp-5098 is UBR4 E3 catalytic module. The segment at Gly-4698–Ala-4817 adopts a HemiRING-type zinc-finger fold. Zn(2+) is bound by residues Cys-4701, Cys-4704, His-4751, and Cys-4754. The UZI domain maps to Ser-4820–Asp-5098. The segment covering Ser-4891–Ser-4903 has biased composition (low complexity). Positions Ser-4891–Thr-4915 are disordered.

The protein belongs to the UBR4 family. As to expression, constitutively expressed in roots, rosette leaves, inflorescence stems, and flowers. Present in inflorescence meristems, floral meristems and vascular tissues.

The protein resides in the membrane. Its function is as follows. Required for auxin efflux and polar auxin transport (PAT) influencing auxin-mediated developmental responses (e.g. cell elongation, apical dominance, lateral root production, inflorescence architecture, general growth and development). Controls the elongation of the pedicels and stem internodes through auxin action. Involved in the expression modulation of light-regulated genes. Represses CAB1 and CAB3 genes expression in etiolated seedlings. Confers sensitivity to the auxin transport inhibitors N-1-naphthylphthalamic acid (NPA), 2-carboxyphenyl-3-phenylpropane-l,2-dione (CPD), and methyl-2-chloro-9-hydroxyfluorene-9-carboxylate (CFM). Influences the polarized subcellular distribution of the auxin transporter PIN1 in response to auxin transport inhibitors. Plays a role in the regulation of responses to phytohormones such as auxin, cytokinins, ethylene and gibberellic acid (GA), particularly during light-mediated stimuli (e.g. shade ovoidance, etiolation). Required for pericycle cell activation to form lateral root primordia (LRP) in both high and low phosphate P conditions. Necessary for the plant-growth promotion and lateral root development mediated by the fungus Trichoderma virens. In Arabidopsis thaliana (Mouse-ear cress), this protein is Auxin transport protein BIG (BIG).